The chain runs to 86 residues: MVKIRLTRGGAKKRPFYQIIVTDSRNKRDGRNIERVGHYNPVAQGAESRVVLNMARVEHWVRNGAQLTDKVRSLLKEVSKTQATAA.

It belongs to the bacterial ribosomal protein bS16 family.

This is Small ribosomal subunit protein bS16 from Xylella fastidiosa (strain M23).